The chain runs to 458 residues: tRNA modification GTPase MnmE (458 aa).

(6S)-5-formyl-5,6,7,8-tetrahydrofolate is bound by residues R22, E85, and R124. Residues 220–379 form the TrmE-type G domain; sequence GLATAIIGRP…LEEAISRLFF (160 aa). A K(+)-binding site is contributed by N230. GTP-binding positions include 230–235, 249–255, and 274–277; these read NVGKSS, TDIPGTT, and DTAG. A Mg(2+)-binding site is contributed by S234. K(+)-binding residues include T249, I251, and T254. T255 contributes to the Mg(2+) binding site. Residue K458 participates in (6S)-5-formyl-5,6,7,8-tetrahydrofolate binding.

The protein belongs to the TRAFAC class TrmE-Era-EngA-EngB-Septin-like GTPase superfamily. TrmE GTPase family. As to quaternary structure, homodimer. Heterotetramer of two MnmE and two MnmG subunits. Requires K(+) as cofactor.

It localises to the cytoplasm. In terms of biological role, exhibits a very high intrinsic GTPase hydrolysis rate. Involved in the addition of a carboxymethylaminomethyl (cmnm) group at the wobble position (U34) of certain tRNAs, forming tRNA-cmnm(5)s(2)U34. The protein is tRNA modification GTPase MnmE of Shouchella clausii (strain KSM-K16) (Alkalihalobacillus clausii).